A 276-amino-acid polypeptide reads, in one-letter code: Large ribosomal subunit protein uL2 (276 aa).

The tract at residues 222 to 276 is disordered; sequence GVAMNPIDHPLGGGEGRSSGGRHPVSPWGMPTKGYKTRDRKKASSKLIIKRRGQK. Over residues 259 to 276 the composition is skewed to basic residues; that stretch reads RDRKKASSKLIIKRRGQK.

This sequence belongs to the universal ribosomal protein uL2 family. As to quaternary structure, part of the 50S ribosomal subunit. Forms a bridge to the 30S subunit in the 70S ribosome.

One of the primary rRNA binding proteins. Required for association of the 30S and 50S subunits to form the 70S ribosome, for tRNA binding and peptide bond formation. It has been suggested to have peptidyltransferase activity; this is somewhat controversial. Makes several contacts with the 16S rRNA in the 70S ribosome. The sequence is that of Large ribosomal subunit protein uL2 from Nitratidesulfovibrio vulgaris (strain ATCC 29579 / DSM 644 / CCUG 34227 / NCIMB 8303 / VKM B-1760 / Hildenborough) (Desulfovibrio vulgaris).